The chain runs to 361 residues: Peptide chain release factor 1 (361 aa).

Q237 carries the N5-methylglutamine modification. Residues 283-296 (VEDEKRRSEEESTR) show a composition bias toward basic and acidic residues. Residues 283–305 (VEDEKRRSEEESTRRNLVSSGDR) are disordered.

The protein belongs to the prokaryotic/mitochondrial release factor family. In terms of processing, methylated by PrmC. Methylation increases the termination efficiency of RF1.

It localises to the cytoplasm. In terms of biological role, peptide chain release factor 1 directs the termination of translation in response to the peptide chain termination codons UAG and UAA. This is Peptide chain release factor 1 from Shewanella woodyi (strain ATCC 51908 / MS32).